Here is a 354-residue protein sequence, read N- to C-terminus: Rhodopsin (354 aa).

The Extracellular segment spans residues 1-36 (MNGTEGPDFYVPMVNTTGIVRSPYDYPQYYLVNPAA). N-linked (GlcNAc...) asparagine glycosylation is found at asparagine 2 and asparagine 15. The helical transmembrane segment at 37 to 61 (FSMLAAYMFFLILVGFPVNFLTLYV) threads the bilayer. Residues 62–73 (TMEHKKLRTPLN) are Cytoplasmic-facing. A helical membrane pass occupies residues 74–96 (YILLNLAVANLFMVIGGFTTTMY). At 97–110 (TSMHGYFVLGRTGC) the chain is on the extracellular side. Residues cysteine 110 and cysteine 187 are joined by a disulfide bond. The helical transmembrane segment at 111–133 (NLEGFFATLGGEIALWSLVVLAV) threads the bilayer. Positions 134–136 (ERW) match the 'Ionic lock' involved in activated form stabilization motif. The Cytoplasmic portion of the chain corresponds to 134-152 (ERWVVVCKPISNFRFGENH). Residues 153–173 (AVMGVSFTWLMACACSVPPLF) form a helical membrane-spanning segment. The Extracellular segment spans residues 174-202 (GWSRYIPEGMQCSCGIDYYTRAPGYNNES). A helical transmembrane segment spans residues 203 to 224 (FVIYMFVCHFSIPLTIIFFCYG). The Cytoplasmic portion of the chain corresponds to 225–252 (RLLCAVKDAAAAQQESETTQRAEREVSR). Residues 253-274 (MVVIMVIGFLICWLPYASVAWF) form a helical membrane-spanning segment. Topologically, residues 275 to 286 (IFTHQGSEFGPV) are extracellular. Residues 287–308 (FMTIPAFFAKSSAIYNPMIYIC) form a helical membrane-spanning segment. Lysine 296 bears the N6-(retinylidene)lysine mark. At 309-354 (MNKQFRHCMITTLCCGKNPFEEEEGASTTASKTEASSVSSSHVSPA) the chain is on the cytoplasmic side. 2 S-palmitoyl cysteine lipidation sites follow: cysteine 322 and cysteine 323. A disordered region spans residues 333-354 (GASTTASKTEASSVSSSHVSPA). Residues 334–354 (ASTTASKTEASSVSSSHVSPA) are compositionally biased toward low complexity.

The protein belongs to the G-protein coupled receptor 1 family. Opsin subfamily. Post-translationally, phosphorylated on some or all of the serine and threonine residues present in the C-terminal region. Contains one covalently linked retinal chromophore.

It localises to the membrane. Its subcellular location is the cell projection. The protein resides in the cilium. The protein localises to the photoreceptor outer segment. Functionally, photoreceptor required for image-forming vision at low light intensity. While most salt water fish species use retinal as chromophore, most freshwater fish use 3-dehydroretinal, or a mixture of retinal and 3-dehydroretinal. Light-induced isomerization of 11-cis to all-trans retinal triggers a conformational change that activates signaling via G-proteins. Subsequent receptor phosphorylation mediates displacement of the bound G-protein alpha subunit by arrestin and terminates signaling. In Zeus faber (John Dory), this protein is Rhodopsin (rho).